The sequence spans 692 residues: DNA repair protein RAD34 (692 aa).

The tract at residues 1-38 is disordered; sequence MAKRLLESSQNDQANRKNSKIEKKEVSFYEEEETDDSF. Over residues 28–38 the composition is skewed to acidic residues; the sequence is FYEEEETDDSF.

It belongs to the XPC family.

It is found in the nucleus. Functionally, involved in nucleotide excision repair (NER) of damaged ribosomal DNA (rDNA). Required for the repair of the RNA polymerase I-transcribed strand of rDNA. In Saccharomyces cerevisiae (strain ATCC 204508 / S288c) (Baker's yeast), this protein is DNA repair protein RAD34 (RAD34).